The primary structure comprises 342 residues: Sesquiterpene synthase MBR_09977 (342 aa).

The Mg(2+) site is built by D91 and D96. A DDXXXD motif motif is present at residues 91–96 (DDLFVD). R184 serves as a coordination point for substrate. N230, S234, and E238 together coordinate Mg(2+).

It belongs to the terpene synthase family. Mg(2+) is required as a cofactor.

The enzyme catalyses (2E,6E)-farnesyl diphosphate + H2O = (+)-corvol ether B + diphosphate. It carries out the reaction (2E,6E)-farnesyl diphosphate + H2O = (+)-corvol ether A + diphosphate. In terms of biological role, terpene synthase that catalyzes the conversion of (2E,6E)-farnesyl diphosphate (FPP) into sesquiterpenes which are important for fungi-environment interactions. Produces a mixture consisting of 8 sesquiterpenes including corvol ethers A and B, as well as traces of epizonarene, gamma-cadinene, delta-cadinene, alpha-cadinene, alpha-cadinol, and an unidentified sesquiterpene. The major product is corvol ether A. In Metarhizium brunneum (strain ARSEF 3297), this protein is Sesquiterpene synthase MBR_09977.